A 295-amino-acid chain; its full sequence is MAHQLLCCEMETIRRAYPDANLLNDRVLRAMLKAEETCAPSVSYFKCVQKEILPSMRKIVATWMLEVCEEQKCEEEVFPLAMNYLDRFLSLEPVKKSRLQLLGATCMFVASKMKETIPLTAEKLCIYTDNSIRPDELLHMELVLVNKLKWNLAAMTPHDFIEHFLSKMPVAEENKQIIRKHAQTFVALCATDVKFISNPPSMVAAGSVAAAAQGLHLGSANGFLSYHRLTRFLSKVIRCDPDCLRACQEQIEALLESSLRQAQQQNLDPKAAEEEEEEEEVDLACTPTDVRDVNI.

One can recognise a Cyclin N-terminal domain in the interval 28–152; the sequence is LRAMLKAEET…VLVNKLKWNL (125 aa). Residues 264–295 form a disordered region; it reads QQNLDPKAAEEEEEEEEVDLACTPTDVRDVNI. Lysine 270 is covalently cross-linked (Glycyl lysine isopeptide (Lys-Gly) (interchain with G-Cter in ubiquitin)). The segment covering 273 to 282 has biased composition (acidic residues); that stretch reads EEEEEEEEVD. Threonine 286 is modified (phosphothreonine).

Belongs to the cyclin family. Cyclin D subfamily. As to quaternary structure, interacts with either CDK4 or CDK6 protein kinase to form a serine/threonine kinase holoenzyme complex. The cyclin subunit imparts substrate specificity to the complex. Component of the ternary complex CCND1/CDK4/CDKN1B required for nuclear translocation and modulation of CDK4-mediated kinase activity. Interacts directly with CDKN1B. Can form similar complexes with either CDKN1A or CDKN2A. Interacts with UHRF2; the interaction ubiquitinates CCND1 and appears to occur independently of phosphorylation. Interacts with USP2. Interacts (via cyclin N-terminal domain) with INSM1 (via N-terminal region); the interaction competes with the binding of CCND1 to CDK4 during cell cycle progression and inhibits CDK4 activity. Interacts with CDK4; the interaction is prevented with the binding of CCND1 to INSM1 during cell cycle progression. Post-translationally, phosphorylation at Thr-286 by MAP kinases is required for ubiquitination and degradation by the DCX(AMBRA1) complex. It also plays an essential role for recognition by the FBXO31 component of SCF (SKP1-cullin-F-box) protein ligase complex following DNA damage. Ubiquitinated at Lys-270 by the DCX(AMBRA1) complex during the transition from G1 to S cell phase, leading to its degradation: ubiquitination is dependent on Thr-286 phosphorylation. The DCX(AMBRA1) complex represents the major regulator of CCND1 stability during the G1/S transition. Also ubiquitinated by the SCF(FBXO4) and Cul7-RING(FBXW8) ubiquitin-protein ligase complexes. Following DNA damage it is ubiquitinated by the SCF(FBXO31) protein ligase complex. SCF(FBXO31) ubiquitination is dependent on Thr-286 phosphorylation. Ubiquitinated also by UHRF2 apparently in a phosphorylation-independent manner. Ubiquitination leads to its degradation and G1 arrest. Deubiquitinated by USP2; leading to its stabilization.

The protein resides in the nucleus. Its subcellular location is the cytoplasm. It is found in the nucleus membrane. Regulatory component of the cyclin D1-CDK4 (DC) complex that phosphorylates and inhibits members of the retinoblastoma (RB) protein family including RB1 and regulates the cell-cycle during G(1)/S transition. Phosphorylation of RB1 allows dissociation of the transcription factor E2F from the RB/E2F complex and the subsequent transcription of E2F target genes which are responsible for the progression through the G(1) phase. Hypophosphorylates RB1 in early G(1) phase. Cyclin D-CDK4 complexes are major integrators of various mitogenenic and antimitogenic signals. Also a substrate for SMAD3, phosphorylating SMAD3 in a cell-cycle-dependent manner and repressing its transcriptional activity. Component of the ternary complex, cyclin D1/CDK4/CDKN1B, required for nuclear translocation and activity of the cyclin D-CDK4 complex. Exhibits transcriptional corepressor activity with INSM1 on the NEUROD1 and INS promoters in a cell cycle-independent manner. This is G1/S-specific cyclin-D1 (CCND1) from Bos taurus (Bovine).